The primary structure comprises 90 residues: Small ribosomal subunit protein bS16 (90 aa).

This sequence belongs to the bacterial ribosomal protein bS16 family.

This chain is Small ribosomal subunit protein bS16, found in Streptococcus gordonii (strain Challis / ATCC 35105 / BCRC 15272 / CH1 / DL1 / V288).